The primary structure comprises 148 residues: uncharacterized protein (148 aa).

Residues 38–99 (QFRRHHHAEH…RRHLRKGHLK (62 aa)) form a disordered region. The segment covering 64–82 (FHHDGGRHGHATRIHENNR) has biased composition (basic and acidic residues). Residues 83–99 (RPHKRNRRRHLRKGHLK) are compositionally biased toward basic residues.

This is an uncharacterized protein from Fowl adenovirus A serotype 1 (strain CELO / Phelps) (FAdV-1).